Consider the following 151-residue polypeptide: Late embryogenesis abundant protein Lea14-A (151 aa).

The protein belongs to the LEA type 2 family.

This Gossypium hirsutum (Upland cotton) protein is Late embryogenesis abundant protein Lea14-A (LEA14-A).